A 248-amino-acid polypeptide reads, in one-letter code: Phosphomannomutase (248 aa).

Asp-12 acts as the Nucleophile in catalysis. 2 residues coordinate Mg(2+): Asp-12 and Asp-14. The Proton donor/acceptor role is filled by Asp-14. Alpha-D-mannose 1-phosphate is bound by residues Arg-21, Arg-123, Arg-134, Arg-141, Ser-179, and Asp-181. Mg(2+) contacts are provided by Asp-207, Phe-219, and Thr-224.

Belongs to the eukaryotic PMM family. Homodimer. Requires Mg(2+) as cofactor.

The protein localises to the cytoplasm. It catalyses the reaction alpha-D-mannose 1-phosphate = D-mannose 6-phosphate. The protein operates within nucleotide-sugar biosynthesis; GDP-alpha-D-mannose biosynthesis; alpha-D-mannose 1-phosphate from D-fructose 6-phosphate: step 2/2. Catalyzes the interconversion of mannose-6-phosphate to mannose-1-phosphate, the precursor for the synthesis of GDP-mannose. GDP-mannose is an essential sugar nucleotide for the synthesis of D-mannose-containing cell wall polysaccharides (galactomannans and glucomannans), glycolipids, glycoproteins and the antioxidant L-ascorbate. This chain is Phosphomannomutase, found in Spinacia oleracea (Spinach).